The chain runs to 109 residues: Resistin (109 aa).

Residues 1–18 (MKALSFLFIPVLGLLVCG) form the signal peptide. Intrachain disulfides connect C51–C104, C63–C103, C72–C89, C74–C91, and C78–C93.

Belongs to the resistin/FIZZ family. Homodimer; disulfide-linked.

The protein resides in the secreted. Its function is as follows. Hormone that seems to suppress insulin ability to stimulate glucose uptake into adipose cells. Potentially links obesity to diabetes. The polypeptide is Resistin (RETN) (Bos taurus (Bovine)).